Reading from the N-terminus, the 388-residue chain is 3-dehydroquinate synthase (388 aa).

Residues 85–90, 119–123, 143–144, K156, K165, and 183–186 contribute to the NAD(+) site; these read DGEQYK, GVIGD, TT, and TLKT. Positions 198, 261, and 278 each coordinate Zn(2+).

Belongs to the sugar phosphate cyclases superfamily. Dehydroquinate synthase family. Requires Co(2+) as cofactor. The cofactor is Zn(2+). NAD(+) serves as cofactor.

It is found in the cytoplasm. The enzyme catalyses 7-phospho-2-dehydro-3-deoxy-D-arabino-heptonate = 3-dehydroquinate + phosphate. Its pathway is metabolic intermediate biosynthesis; chorismate biosynthesis; chorismate from D-erythrose 4-phosphate and phosphoenolpyruvate: step 2/7. In terms of biological role, catalyzes the conversion of 3-deoxy-D-arabino-heptulosonate 7-phosphate (DAHP) to dehydroquinate (DHQ). This chain is 3-dehydroquinate synthase, found in Psychrobacter arcticus (strain DSM 17307 / VKM B-2377 / 273-4).